The following is a 221-amino-acid chain: Toll/interleukin-1 receptor domain-containing adapter protein (221 aa).

Residues 1-82 form a disordered region; it reads MASSTSLPAP…HASDSGSSRW (82 aa). Over residues 48–67 the composition is skewed to low complexity; it reads SQPTSQDSPLPPSLSSVTSP. The TIR domain maps to 84 to 213; the sequence is KDYDVCVCHS…GGFRQVKEAV (130 aa). 2 disulfide bridges follow: Cys-89–Cys-134 and Cys-142–Cys-174.

As to quaternary structure, homodimer. Also forms heterodimers with MYD88. May interact with PIK3AP1. Interacts with TLR4 and IRAK2 via their respective TIR domains. Interacts with BMX and TBK1. Interacts with EIF2AK2. Does not interact with IRAK1, nor TLR9. Interacts with TLR2. Interacts with RAGE/AGER. In terms of assembly, (Microbial infection) In case of infection, interacts with B.melitensis protein TcpB (AC Q8YF53); TcpB abolishes the TLR4-TIRAP interaction and downstream signaling. Post-translationally, phosphorylated by IRAK1 and IRAK4. Also phosphorylated by BTK. Polyubiquitinated. Polyubiquitination follows phosphorylation by BTK and leads to TIRAP degradation. Highly expressed in liver, kidney, spleen, skeletal muscle and heart. Also detected in peripheral blood leukocytes, lung, placenta, small intestine, thymus, colon and brain.

Its subcellular location is the cytoplasm. It is found in the cell membrane. It localises to the membrane. Its function is as follows. Adapter involved in TLR2, TLR4 and RAGE signaling pathways in the innate immune response. Acts via IRAK2 and TRAF-6, leading to the activation of NF-kappa-B, MAPK1, MAPK3 and JNK, and resulting in cytokine secretion and the inflammatory response. Positively regulates the production of TNF-alpha (TNF) and interleukin-6 (IL6). The protein is Toll/interleukin-1 receptor domain-containing adapter protein (TIRAP) of Homo sapiens (Human).